Consider the following 197-residue polypeptide: Thymidylate kinase (197 aa).

ATP is bound at residue 7–14 (GIDGSGKS).

This sequence belongs to the thymidylate kinase family.

It carries out the reaction dTMP + ATP = dTDP + ADP. Functionally, phosphorylation of dTMP to form dTDP in both de novo and salvage pathways of dTTP synthesis. This Thermotoga maritima (strain ATCC 43589 / DSM 3109 / JCM 10099 / NBRC 100826 / MSB8) protein is Thymidylate kinase (tmk).